Reading from the N-terminus, the 392-residue chain is SH3 domain-binding protein 5-like (392 aa).

Positions 1 to 57 are disordered; the sequence is MADLKKAAGGRETPQGELRSEVVEDEGPRSPVAEEPGGSGSNSSETKLSPREEEELD. Thr-13 carries the phosphothreonine modification. The segment covering 18–28 has biased composition (basic and acidic residues); that stretch reads LRSEVVEDEGP. Phosphoserine occurs at positions 30 and 49. Coiled-coil stretches lie at residues 59–140 and 169–272; these read RIQE…YERA and WQEM…EQIH. The tract at residues 275–332 is disordered; it reads RRGLPPHPLGPRRSSPVGAEAGPEGIEDGDSGIEGAEGGGLEEGSSLGPGPGPDTDTL. Low complexity predominate over residues 317 to 332; the sequence is EGSSLGPGPGPDTDTL. Residues Ser-342, Ser-349, Ser-357, Ser-361, and Ser-377 each carry the phosphoserine modification. Residues 364 to 392 form a disordered region; the sequence is GQELGAQSRGRRGSDIGVRGGRHQRSVSL. Basic residues predominate over residues 383–392; that stretch reads GGRHQRSVSL.

Belongs to the SH3BP5 family.

Functionally, functions as a guanine nucleotide exchange factor (GEF) for RAB11A. This chain is SH3 domain-binding protein 5-like (Sh3bp5l), found in Mus musculus (Mouse).